The sequence spans 951 residues: Glycine dehydrogenase (decarboxylating) 1 (951 aa).

The residue at position 703 (Lys703) is an N6-(pyridoxal phosphate)lysine.

It belongs to the GcvP family. As to quaternary structure, the glycine cleavage system is composed of four proteins: P, T, L and H. It depends on pyridoxal 5'-phosphate as a cofactor.

The enzyme catalyses N(6)-[(R)-lipoyl]-L-lysyl-[glycine-cleavage complex H protein] + glycine + H(+) = N(6)-[(R)-S(8)-aminomethyldihydrolipoyl]-L-lysyl-[glycine-cleavage complex H protein] + CO2. The glycine cleavage system catalyzes the degradation of glycine. The P protein binds the alpha-amino group of glycine through its pyridoxal phosphate cofactor; CO(2) is released and the remaining methylamine moiety is then transferred to the lipoamide cofactor of the H protein. The polypeptide is Glycine dehydrogenase (decarboxylating) 1 (gcvP1) (Pseudomonas putida (strain ATCC 47054 / DSM 6125 / CFBP 8728 / NCIMB 11950 / KT2440)).